Reading from the N-terminus, the 954-residue chain is Mycolic acid-containing lipids exporter MmpL11 (954 aa).

Helical transmembrane passes span 11–31 (FRWA…YLAL), 188–208 (IVLI…LPLV), 214–234 (VVVT…SVFV), 235–255 (TSTV…FILM), 279–299 (GLAV…IYLI), 312–334 (ILAV…ATFG), 373–393 (AIAA…MVLG), 529–549 (TQPL…LVSI), 559–579 (VLMT…VFQW), 597–617 (IPPL…IFLL), 648–668 (AALI…PLVA), and 670–690 (LGVA…LVLV).

It localises to the cell inner membrane. In terms of biological role, contributes to cell wall biosynthesis and biofilm formation. Transports the mycolic acid-containing lipids monomeromycolyl diacylglycerol (MMDAG) and mycolate ester wax (WE) to the bacterial surface. This is Mycolic acid-containing lipids exporter MmpL11 from Mycolicibacterium smegmatis (strain ATCC 700084 / mc(2)155) (Mycobacterium smegmatis).